The primary structure comprises 415 residues: Tyrosine--tRNA ligase (415 aa).

Residues 54–63 (PTGSNIHLGH) carry the 'HIGH' region motif. Positions 248 to 252 (KMSKS) match the 'KMSKS' region motif. Position 251 (K251) interacts with ATP. An S4 RNA-binding domain is found at 351 to 415 (AKAFYLLSAV…GKKTFRRLTA (65 aa)).

It belongs to the class-I aminoacyl-tRNA synthetase family. TyrS type 2 subfamily. In terms of assembly, homodimer.

The protein resides in the cytoplasm. The catalysed reaction is tRNA(Tyr) + L-tyrosine + ATP = L-tyrosyl-tRNA(Tyr) + AMP + diphosphate + H(+). Its function is as follows. Catalyzes the attachment of tyrosine to tRNA(Tyr) in a two-step reaction: tyrosine is first activated by ATP to form Tyr-AMP and then transferred to the acceptor end of tRNA(Tyr). The protein is Tyrosine--tRNA ligase of Parasynechococcus marenigrum (strain WH8102).